Here is a 501-residue protein sequence, read N- to C-terminus: Large ribosomal subunit protein uL2m (501 aa).

Disordered regions lie at residues 187–217 (GRERLSPLRGENTFSQSEGQRWKTQSGAPRR) and 459–501 (AMNP…KRRN). Positions 198 to 213 (NTFSQSEGQRWKTQSG) are enriched in polar residues. Over residues 464–474 (DHPHGGGEGRT) the composition is skewed to basic and acidic residues.

It belongs to the universal ribosomal protein uL2 family.

It localises to the mitochondrion. This chain is Large ribosomal subunit protein uL2m (RPL2), found in Marchantia polymorpha (Common liverwort).